Here is a 298-residue protein sequence, read N- to C-terminus: Lipoyl synthase (298 aa).

Residues Cys40, Cys45, Cys51, Cys67, Cys71, Cys74, and Ser280 each contribute to the [4Fe-4S] cluster site. The Radical SAM core domain maps to 53 to 269 (AVRKTATFMI…KEIALSKGFS (217 aa)).

Belongs to the radical SAM superfamily. Lipoyl synthase family. [4Fe-4S] cluster serves as cofactor.

The protein resides in the cytoplasm. It catalyses the reaction [[Fe-S] cluster scaffold protein carrying a second [4Fe-4S](2+) cluster] + N(6)-octanoyl-L-lysyl-[protein] + 2 oxidized [2Fe-2S]-[ferredoxin] + 2 S-adenosyl-L-methionine + 4 H(+) = [[Fe-S] cluster scaffold protein] + N(6)-[(R)-dihydrolipoyl]-L-lysyl-[protein] + 4 Fe(3+) + 2 hydrogen sulfide + 2 5'-deoxyadenosine + 2 L-methionine + 2 reduced [2Fe-2S]-[ferredoxin]. Its pathway is protein modification; protein lipoylation via endogenous pathway; protein N(6)-(lipoyl)lysine from octanoyl-[acyl-carrier-protein]. Catalyzes the radical-mediated insertion of two sulfur atoms into the C-6 and C-8 positions of the octanoyl moiety bound to the lipoyl domains of lipoate-dependent enzymes, thereby converting the octanoylated domains into lipoylated derivatives. In Bacillus thuringiensis (strain Al Hakam), this protein is Lipoyl synthase.